Here is a 322-residue protein sequence, read N- to C-terminus: Thiamine thiazole synthase (322 aa).

Substrate is bound by residues Cys-84, 105–106 (EA), Gly-113, and Val-178. At Cys-211 the chain carries 2,3-didehydroalanine (Cys). Residues Asp-213, His-228, Met-280, and 290-292 (RMG) contribute to the substrate site.

It belongs to the THI4 family. Homooctamer. Requires Fe cation as cofactor. In terms of processing, during the catalytic reaction, a sulfide is transferred from Cys-211 to a reaction intermediate, generating a dehydroalanine residue.

It localises to the cytoplasm. The protein resides in the nucleus. The catalysed reaction is [ADP-thiazole synthase]-L-cysteine + glycine + NAD(+) = [ADP-thiazole synthase]-dehydroalanine + ADP-5-ethyl-4-methylthiazole-2-carboxylate + nicotinamide + 3 H2O + 2 H(+). Involved in biosynthesis of the thiamine precursor thiazole. Catalyzes the conversion of NAD and glycine to adenosine diphosphate 5-(2-hydroxyethyl)-4-methylthiazole-2-carboxylic acid (ADT), an adenylated thiazole intermediate. The reaction includes an iron-dependent sulfide transfer from a conserved cysteine residue of the protein to a thiazole intermediate. The enzyme can only undergo a single turnover, which suggests it is a suicide enzyme. May have additional roles in adaptation to various stress conditions and in DNA damage tolerance. In Fusarium vanettenii (strain ATCC MYA-4622 / CBS 123669 / FGSC 9596 / NRRL 45880 / 77-13-4) (Fusarium solani subsp. pisi), this protein is Thiamine thiazole synthase.